A 750-amino-acid chain; its full sequence is Methylmalonyl-CoA mutase, mitochondrial (750 aa).

The N-terminal 32 residues, 1–32 (MLRAKNQLFLLSPHYLRQVKESSGSRLIQQRL), are a transit peptide targeting the mitochondrion. Position 50 (Q50) interacts with malonyl-CoA. Position 89 is an N6-acetyllysine (K89). Residues 96-99 (YPTM) and 106-110 (TIRQY) contribute to the malonyl-CoA site. K212 bears the N6-acetyllysine mark. Malonyl-CoA is bound by residues 216–218 (TIQ), R228, K255, H265, and 304–306 (RLS). K335 bears the N6-acetyllysine mark. K343 carries the post-translational modification N6-succinyllysine. Phosphoserine is present on S481. Residue K595 is modified to N6-succinyllysine. N6-acetyllysine is present on K602. The B12-binding domain occupies 614–746 (RPRLLVAKMG…DDIEKCLEKK (133 aa)). Position 627 (H627) interacts with adenosylcob(III)alamin.

It belongs to the methylmalonyl-CoA mutase family. In terms of assembly, homodimer. Interacts (the apoenzyme form) with MMAA; the interaction is GTP dependent. It depends on adenosylcob(III)alamin as a cofactor.

It localises to the mitochondrion matrix. It is found in the mitochondrion. Its subcellular location is the cytoplasm. The enzyme catalyses (R)-methylmalonyl-CoA = succinyl-CoA. Inhibited by itaconyl-CoA, a metabolite that inactivates the coenzyme B12 cofactor. Functionally, catalyzes the reversible isomerization of methylmalonyl-CoA (MMCoA) (generated from branched-chain amino acid metabolism and degradation of dietary odd chain fatty acids and cholesterol) to succinyl-CoA (3-carboxypropionyl-CoA), a key intermediate of the tricarboxylic acid cycle. In Bos taurus (Bovine), this protein is Methylmalonyl-CoA mutase, mitochondrial (MMUT).